The primary structure comprises 110 residues: NADH-quinone oxidoreductase subunit K (110 aa).

The next 3 membrane-spanning stretches (helical) occupy residues 13 to 33, 38 to 58, and 70 to 90; these read VTHG…GIII, ILIL…NFLI, and VFVF…LAIV.

Belongs to the complex I subunit 4L family. As to quaternary structure, NDH-1 is composed of 14 different subunits. Subunits NuoA, H, J, K, L, M, N constitute the membrane sector of the complex.

The protein resides in the cell inner membrane. The catalysed reaction is a quinone + NADH + 5 H(+)(in) = a quinol + NAD(+) + 4 H(+)(out). Its function is as follows. NDH-1 shuttles electrons from NADH, via FMN and iron-sulfur (Fe-S) centers, to quinones in the respiratory chain. The immediate electron acceptor for the enzyme in this species is believed to be ubiquinone. Couples the redox reaction to proton translocation (for every two electrons transferred, four hydrogen ions are translocated across the cytoplasmic membrane), and thus conserves the redox energy in a proton gradient. The polypeptide is NADH-quinone oxidoreductase subunit K (Francisella tularensis subsp. tularensis (strain FSC 198)).